Reading from the N-terminus, the 516-residue chain is Putative fatty acyl-CoA reductase CG8306 (516 aa).

The next 3 membrane-spanning stretches (helical) occupy residues 356 to 376 (WVFR…LDLV), 471 to 491 (ILLG…FKLI), and 496 to 516 (GIST…FGLL).

It belongs to the fatty acyl-CoA reductase family.

The protein localises to the membrane. The enzyme catalyses a long-chain fatty acyl-CoA + 2 NADPH + 2 H(+) = a long-chain primary fatty alcohol + 2 NADP(+) + CoA. Its function is as follows. Catalyzes the reduction of C16 or C18 fatty acyl-CoA to fatty alcohols. This is Putative fatty acyl-CoA reductase CG8306 from Drosophila melanogaster (Fruit fly).